We begin with the raw amino-acid sequence, 90 residues long: uncharacterized protein (90 aa).

A helical membrane pass occupies residues 46-62; that stretch reads MALLVVFLVSLFACTTI.

The protein resides in the membrane. This is an uncharacterized protein from Haemophilus influenzae (strain ATCC 51907 / DSM 11121 / KW20 / Rd).